We begin with the raw amino-acid sequence, 141 residues long: Hemoglobin subunit alpha-A/Q/R/T (141 aa).

In terms of domain architecture, Globin spans 1–141; the sequence is VLSPADKTNV…VSTVLTSKYR (141 aa). Position 3 is a phosphoserine (Ser3). An N6-succinyllysine modification is found at Lys7. Phosphothreonine is present on Thr8. At Lys11 the chain carries N6-succinyllysine. Lys16 is modified (N6-acetyllysine; alternate). Lys16 carries the post-translational modification N6-succinyllysine; alternate. Tyr24 carries the phosphotyrosine modification. Residue Ser35 is modified to Phosphoserine. Lys40 carries the post-translational modification N6-succinyllysine. Phosphoserine is present on Ser49. His58 is an O2 binding site. His87 provides a ligand contact to heme b. Position 102 is a phosphoserine (Ser102). Phosphothreonine is present on Thr108. Residues Ser124 and Ser131 each carry the phosphoserine modification. Phosphothreonine occurs at positions 134 and 137. Ser138 carries the phosphoserine modification.

The protein belongs to the globin family. Heterotetramer of two alpha chains and two beta chains. Red blood cells.

Involved in oxygen transport from the lung to the various peripheral tissues. This chain is Hemoglobin subunit alpha-A/Q/R/T, found in Macaca fascicularis (Crab-eating macaque).